The sequence spans 201 residues: Dephospho-CoA kinase (201 aa).

In terms of domain architecture, DPCK spans 3-201 (WIGLTGGIAC…KWLEELKNQN (199 aa)). Residue 11–16 (ACGKST) coordinates ATP.

This sequence belongs to the CoaE family.

It is found in the cytoplasm. The catalysed reaction is 3'-dephospho-CoA + ATP = ADP + CoA + H(+). Its pathway is cofactor biosynthesis; coenzyme A biosynthesis; CoA from (R)-pantothenate: step 5/5. Catalyzes the phosphorylation of the 3'-hydroxyl group of dephosphocoenzyme A to form coenzyme A. The protein is Dephospho-CoA kinase of Bdellovibrio bacteriovorus (strain ATCC 15356 / DSM 50701 / NCIMB 9529 / HD100).